We begin with the raw amino-acid sequence, 189 residues long: uncharacterized protein (189 aa).

The HTH tetR-type domain occupies 2-62 (RPTNKRILDA…ALLSQHSSNR (61 aa)). Positions 25–44 (TTKEIAEKANVSEATIFRNF) form a DNA-binding region, H-T-H motif.

This is an uncharacterized protein from Bacillus subtilis (strain 168).